The sequence spans 4499 residues: Dynein alpha chain, flagellar outer arm (4499 aa).

Residues 1 to 1677 (MSIFWEVPNA…RIRICDASFP (1677 aa)) form a stem region. Kelch repeat units lie at residues 29–84 (RFVL…ALDD), 86–135 (RLLV…RFGS), 137–183 (VFIF…RFDH), 199–245 (KLLI…VCDG), 253–304 (KVFS…FDVK), and 307–358 (SLLI…IRGL). A Filamin repeat occupies 425–534 (FANTAARNCI…IRGSPFTVKC (110 aa)). Kelch repeat units lie at residues 562–608 (ELVL…VLSD) and 610–661 (ELVV…AVSA). The interval 653 to 720 (PKGAAAVSAE…SRPVSAKPAP (68 aa)) is disordered. A compositionally biased stretch (low complexity) spans 655-689 (GAAAVSAEPSAEPAAEPAAEPAAEPDADAPAAEPA). The span at 690–705 (AEGEEGAVPAEGEEGA) shows a compositional bias: acidic residues. 2 Kelch repeats span residues 750 to 801 (LYVM…ATGN) and 864 to 913 (KLFL…TLSG). Coiled coils occupy residues 1261 to 1334 (ELHK…MIAN) and 1382 to 1450 (KKEL…RRAF). AAA regions lie at residues 1678 to 1921 (YGYE…VLVV) and 1981 to 2225 (DVIV…KSYS). ATP is bound by residues 1716 to 1723 (GPAGTGKT) and 2019 to 2026 (GPTGTGRT). A Kelch 11 repeat occupies 2269-2317 (MIWAFGGGLVEKDGIPYRRNFDKWFKQTWTTVKIPGKGTVYDYFVNPKT). AAA stretches follow at residues 2331 to 2577 (DYDG…VFQG) and 2679 to 2928 (EYNE…ERRY). Residue 2369–2376 (GGAGVGKT) participates in ATP binding. A coiled-coil region spans residues 2655 to 2688 (LADKAYDEVADYTSLYKTLTEALNEYNETNAAMD). An ATP-binding site is contributed by 2717-2724 (GVGGSGKQ). Residues 3003 to 3023 (VGVEKEKVNAENAAAQVEAEK) are a coiled coil. Residues 3003–3262 (VGVEKEKVNA…ERWALTVEQL (260 aa)) are stalk. The stretch at 3070–3117 (LKKPPPGVDDITAVVIILLENNPKDKSWQAAQKLMNNVDKFLERVKSF) is one Kelch 12 repeat. Coiled-coil stretches lie at residues 3170 to 3262 (DVVQ…VEQL) and 3486 to 3515 (NKER…ELED). The tract at residues 3320–3550 (LVDDALVAGW…AKRVSTEISE (231 aa)) is AAA 5. Positions 3614–3687 (GRKKGKGLKK…VGDAEDEDDE (74 aa)) are disordered. A compositionally biased stretch (basic and acidic residues) spans 3630 to 3653 (QPMDHQSLMEKARRSSGVGDRRPS). An AAA 6 region spans residues 3843–4082 (LQNFCEHMMG…LTTCGDVLYN (240 aa)).

The protein belongs to the dynein heavy chain family. In terms of assembly, consists of at least 3 heavy chains (alpha, beta and gamma), 2 intermediate chains and 8 light chains.

The protein localises to the cell projection. It localises to the cilium. Its subcellular location is the flagellum. It is found in the cytoplasm. The protein resides in the cytoskeleton. The protein localises to the flagellum axoneme. In terms of biological role, force generating protein of eukaryotic cilia and flagella. Produces force towards the minus ends of microtubules. Dynein has ATPase activity; the force-producing power stroke is thought to occur on release of ADP. This Chlamydomonas reinhardtii (Chlamydomonas smithii) protein is Dynein alpha chain, flagellar outer arm (ODA11).